A 97-amino-acid chain; its full sequence is Aspartyl/glutamyl-tRNA(Asn/Gln) amidotransferase subunit C (97 aa).

Belongs to the GatC family. As to quaternary structure, heterotrimer of A, B and C subunits.

The enzyme catalyses L-glutamyl-tRNA(Gln) + L-glutamine + ATP + H2O = L-glutaminyl-tRNA(Gln) + L-glutamate + ADP + phosphate + H(+). It catalyses the reaction L-aspartyl-tRNA(Asn) + L-glutamine + ATP + H2O = L-asparaginyl-tRNA(Asn) + L-glutamate + ADP + phosphate + 2 H(+). Allows the formation of correctly charged Asn-tRNA(Asn) or Gln-tRNA(Gln) through the transamidation of misacylated Asp-tRNA(Asn) or Glu-tRNA(Gln) in organisms which lack either or both of asparaginyl-tRNA or glutaminyl-tRNA synthetases. The reaction takes place in the presence of glutamine and ATP through an activated phospho-Asp-tRNA(Asn) or phospho-Glu-tRNA(Gln). The chain is Aspartyl/glutamyl-tRNA(Asn/Gln) amidotransferase subunit C from Listeria welshimeri serovar 6b (strain ATCC 35897 / DSM 20650 / CCUG 15529 / CIP 8149 / NCTC 11857 / SLCC 5334 / V8).